The following is a 294-amino-acid chain: 4-hydroxy-tetrahydrodipicolinate synthase (294 aa).

Position 45 (Thr-45) interacts with pyruvate. The active-site Proton donor/acceptor is the Tyr-133. Lys-161 serves as the catalytic Schiff-base intermediate with substrate. Ile-203 lines the pyruvate pocket.

It belongs to the DapA family. In terms of assembly, homotetramer; dimer of dimers.

It localises to the cytoplasm. The catalysed reaction is L-aspartate 4-semialdehyde + pyruvate = (2S,4S)-4-hydroxy-2,3,4,5-tetrahydrodipicolinate + H2O + H(+). The protein operates within amino-acid biosynthesis; L-lysine biosynthesis via DAP pathway; (S)-tetrahydrodipicolinate from L-aspartate: step 3/4. Functionally, catalyzes the condensation of (S)-aspartate-beta-semialdehyde [(S)-ASA] and pyruvate to 4-hydroxy-tetrahydrodipicolinate (HTPA). This is 4-hydroxy-tetrahydrodipicolinate synthase from Buchnera aphidicola subsp. Acyrthosiphon pisum (strain APS) (Acyrthosiphon pisum symbiotic bacterium).